The primary structure comprises 305 residues: Chromatin modification-related protein EAF3 (305 aa).

Residues 14–67 enclose the Tudor-knot domain; the sequence is VLAYHGPLLYEARVILAEVWDESNTLLGTVGPHYFIHYKGWKQTWDEWVPESRL. The interval 86-127 is disordered; the sequence is AKKGRSTGGSGGTGSPGAGKGGLKDKKKDTKKRGRDAMESES. Gly residues predominate over residues 91–106; the sequence is STGGSGGTGSPGAGKG. The 174-residue stretch at 131-304 folds into the MRG domain; sequence KRPEVKIVIP…TTTHYQNLSR (174 aa).

This sequence belongs to the MRG family. In terms of assembly, component of the NuA4 histone acetyltransferase complex.

It is found in the nucleus. Functionally, involved in deacetylation of histones, chromatin assembly and chromosome segregation. May act as a transcriptional oscillator, directing histone deacetylases to specific chromosomal domains. Component of the NuA4 histone acetyltransferase complex which is involved in transcriptional activation of selected genes principally by acetylation of nucleosomal histone H4 and H2A. The NuA4 complex is also involved in DNA repair. In Cryptococcus neoformans var. neoformans serotype D (strain B-3501A) (Filobasidiella neoformans), this protein is Chromatin modification-related protein EAF3 (EAF3).